The chain runs to 456 residues: Choline kinase (456 aa).

Belongs to the choline/ethanolamine kinase family. In terms of assembly, monomer. Requires Mg(2+) as cofactor.

It is found in the cytoplasm. The protein localises to the nucleus. It carries out the reaction choline + ATP = phosphocholine + ADP + H(+). The protein operates within phospholipid metabolism; phosphatidylcholine biosynthesis; phosphocholine from choline: step 1/1. Catalyzes the committed step in the synthesis of phosphatidylcholine by the CDP-choline pathway. This is Choline kinase from Schizosaccharomyces pombe (strain 972 / ATCC 24843) (Fission yeast).